We begin with the raw amino-acid sequence, 92 residues long: Cell division protein FtsB (92 aa).

Residues Met-1 to Leu-3 lie on the Cytoplasmic side of the membrane. Residues Phe-4 to Phe-21 form a helical membrane-spanning segment. The Periplasmic portion of the chain corresponds to Gly-22–Lys-92. A coiled-coil region spans residues Tyr-26–Gln-74.

It belongs to the FtsB family. Part of a complex composed of FtsB, FtsL and FtsQ.

It localises to the cell inner membrane. Functionally, essential cell division protein. May link together the upstream cell division proteins, which are predominantly cytoplasmic, with the downstream cell division proteins, which are predominantly periplasmic. This chain is Cell division protein FtsB, found in Pasteurella multocida (strain Pm70).